Here is a 266-residue protein sequence, read N- to C-terminus: Putative carbamate hydrolase RutD (266 aa).

The 106-residue stretch at 14–119 (PVVVLSAGLG…LVNGWLSLSP (106 aa)) folds into the AB hydrolase-1 domain.

The protein belongs to the AB hydrolase superfamily. Hydrolase RutD family.

It catalyses the reaction carbamate + 2 H(+) = NH4(+) + CO2. Its function is as follows. Involved in pyrimidine catabolism. May facilitate the hydrolysis of carbamate, a reaction that can also occur spontaneously. The chain is Putative carbamate hydrolase RutD from Klebsiella pneumoniae subsp. pneumoniae (strain ATCC 700721 / MGH 78578).